The following is a 947-amino-acid chain: MHKFRYSLHQHYSKRNSSDKSKDSPISQNSNEENDSTKLSSSSLQDLHDDLDDIYNNYTLAQGTNNNSVDTLDSENNQAINKFIDKPPAIHGMEPQLPVMHVSSRLSSLGNTTNETGESIAKSAPGTPLSSHSFDFRPHHPRAVTNSSLNVLLDTPNVSSEFNHLVDQTPPNESVERFDDSNNTVDNTEEEENNDDTDEIPKSETLKQNEENWEKKGAAVKTIKTMDGEMKTIRRNVTDFKFGKELGEGSYSTVILATDKITGKQYAVKVLDKRHIIKEKKVKYVNIEKHALNRLSNRLGVISLYFTFQDKDSLYFVLDYASNGELLTLIKRYNTLNEECTRHFGAQILDAIKYMHDNGVIHRDLKPENILLDDKMRIQITDFGTARLLEKKNDESEEYPVDVRAKSFVGTAEYVSPELLENKYCGKPGDVWAFGCIIYQMIAGKPPFKATNEYLTFQKITKLQFAFSAGFPTIIRDLIKKILVLQPSRRATIPEIQKHYFFQSVDFKDFDSIWLSDPPEIGPYKMTAKSMMKVPELNKAPITTVIKKNVKKSTNSNSNTNNVATAVGGSSSNGHKGSSPTPEKEPSPATINNKSTEKVSAASVAAYVLNKPATNQNSSTSEDSSKRSSNSNETRKLSYSQQDYIPGTNILRPQISTRPSVGSYVKTTPSKDRKTLTKVPSNIHQQQEKVKPKVMEVKPATTLEAAWEPYLTHPDERILRIGPVIAHKEPTEPFEKKNKASLHISPLDINKEQRSRSNTSLLTQIVNEVNNNTSELKKVENADESLAIIEPQYNMKRSPTSDSKKSMDIERSASTSGSRISKKAIFKKLGFSHLEKNDSEESNGPSLTEKPQTCTLVVTTHGRALLFIRNDIESNYLLIAEIKLKYPFIHFQELVISQTKFSKLVPSVGVFVISSIDNSLIFEVEKFEVNQWTEALAKSKYNEIGKR.

Positions 1 to 14 are enriched in basic residues; sequence MHKFRYSLHQHYSK. Disordered stretches follow at residues 1–43, 108–132, and 162–212; these read MHKF…SSSS, SLGN…LSSH, and FNHL…NEEN. The span at 108-117 shows a compositional bias: polar residues; sequence SLGNTTNETG. A compositionally biased stretch (acidic residues) spans 187–198; it reads NTEEEENNDDTD. Over residues 199-212 the composition is skewed to basic and acidic residues; it reads EIPKSETLKQNEEN. In terms of domain architecture, Protein kinase spans 240 to 502; the sequence is FKFGKELGEG…IPEIQKHYFF (263 aa). ATP-binding positions include 250–252 and K269; that span reads SYS. The segment at 271–316 is PIF-pocket; that stretch reads LDKRHIIKEKKVKYVNIEKHALNRLSNRLGVISLYFTFQDKDSLYF. ATP is bound by residues 319 to 321 and E325; that span reads DYA. Catalysis depends on D364, which acts as the Proton acceptor. ATP-binding residues include E368 and D382. Low complexity-rich tracts occupy residues 550 to 579 and 618 to 632; these read VKKS…KGSS and SSTS…SNSN. 4 disordered regions span residues 550–598, 611–644, 660–686, and 794–816; these read VKKS…STEK, KPAT…QQDY, SVGS…IHQQ, and NMKR…ASTS. Over residues 802-811 the composition is skewed to basic and acidic residues; that stretch reads DSKKSMDIER.

It belongs to the protein kinase superfamily. AGC Ser/Thr protein kinase family. PDPK1 subfamily.

The protein resides in the nucleus. Its subcellular location is the cytoplasm. It is found in the cell cortex. It catalyses the reaction L-seryl-[protein] + ATP = O-phospho-L-seryl-[protein] + ADP + H(+). The enzyme catalyses L-threonyl-[protein] + ATP = O-phospho-L-threonyl-[protein] + ADP + H(+). Functionally, serine/threonine-protein kinase which is part sphingolipid-mediated signaling pathway that is required for the internalization step of endocytosis by regulating eisosome assembly and organization, and modulating the organization of the plasma membrane. Phosphorylates and activates PKC1. Activates YPK1 and YPK2, 2 components of signaling cascade required for maintenance of cell wall integrity. Required for stress-induced P-body assembly and regulates global mRNA decay at the deadenylation step. This Candida albicans (strain SC5314 / ATCC MYA-2876) (Yeast) protein is Serine/threonine-protein kinase PKH2.